We begin with the raw amino-acid sequence, 315 residues long: Olfactory receptor 10H2 (315 aa).

Over 1-25 the chain is Extracellular; it reads MLGLNHTSMSEFILVGFSAFPHLQL. Residue Asn5 is glycosylated (N-linked (GlcNAc...) asparagine). Residues 26-46 traverse the membrane as a helical segment; the sequence is MLFLLFLLMYLFTLLGNLLIM. At 47–54 the chain is on the cytoplasmic side; that stretch reads ATVWSERS. The chain crosses the membrane as a helical span at residues 55 to 75; it reads LHTPMYLFLCVLSVSEILYTV. Residues 76–99 lie on the Extracellular side of the membrane; it reads AIIPRMLADLLSTQRSIAFLACAS. Residues Cys97 and Cys189 are joined by a disulfide bond. Residues 100-120 form a helical membrane-spanning segment; that stretch reads QMFFSFSFGFTHSFLLTVMGY. At 121-139 the chain is on the cytoplasmic side; that stretch reads DRYVAICHPLRYNVLMSPR. Residues 140–160 form a helical membrane-spanning segment; it reads GCACLVGCSWAGGSVMGMVVT. Over 161-197 the chain is Extracellular; the sequence is SAIFQLTFCGSHEIQHFLCHVPPLLKLACGNNVPAVA. A helical membrane pass occupies residues 198 to 218; the sequence is LGVGLVCIMALLGCFLLILLS. Residues 219–238 are Cytoplasmic-facing; the sequence is YAFIVADILKIPSAEGRNKA. A helical membrane pass occupies residues 239–259; sequence FSTCASHLIVVIVHYGFASVI. Residues 260 to 272 are Extracellular-facing; it reads YLKPKGPHSQEGD. Residues 273-293 form a helical membrane-spanning segment; it reads TLMATTYAVLTPFLSPIIFSL. The Cytoplasmic segment spans residues 294 to 315; sequence RNKELKVAMKRTFLSTLYSSGT.

The protein belongs to the G-protein coupled receptor 1 family.

The protein localises to the cell membrane. Odorant receptor. The chain is Olfactory receptor 10H2 (OR10H2) from Homo sapiens (Human).